The sequence spans 200 residues: NAD(P)H-quinone oxidoreductase subunit 6, chloroplastic (200 aa).

5 helical membrane-spanning segments follow: residues 13–33, 35–55, 64–84, 101–121, and 156–176; these read VFFV…VFLT, IVYS…LYLL, AQIL…VMLI, TITL…ILSI, and LLPF…AITI.

It belongs to the complex I subunit 6 family. In terms of assembly, NDH is composed of at least 16 different subunits, 5 of which are encoded in the nucleus.

The protein localises to the plastid. It is found in the chloroplast thylakoid membrane. It catalyses the reaction a plastoquinone + NADH + (n+1) H(+)(in) = a plastoquinol + NAD(+) + n H(+)(out). It carries out the reaction a plastoquinone + NADPH + (n+1) H(+)(in) = a plastoquinol + NADP(+) + n H(+)(out). NDH shuttles electrons from NAD(P)H:plastoquinone, via FMN and iron-sulfur (Fe-S) centers, to quinones in the photosynthetic chain and possibly in a chloroplast respiratory chain. The immediate electron acceptor for the enzyme in this species is believed to be plastoquinone. Couples the redox reaction to proton translocation, and thus conserves the redox energy in a proton gradient. The sequence is that of NAD(P)H-quinone oxidoreductase subunit 6, chloroplastic (ndhG) from Anthoceros angustus (Hornwort).